The following is a 56-amino-acid chain: Large ribosomal subunit protein eL37 (56 aa).

Zn(2+)-binding residues include Cys19, Cys22, Cys34, and Cys37. The segment at 19-37 (CRRCGSVSFNVHTKQCTSC) adopts a C4-type zinc-finger fold.

This sequence belongs to the eukaryotic ribosomal protein eL37 family. Zn(2+) serves as cofactor.

Binds to the 23S rRNA. The protein is Large ribosomal subunit protein eL37 (rpl37e) of Methanosarcina acetivorans (strain ATCC 35395 / DSM 2834 / JCM 12185 / C2A).